The sequence spans 163 residues: Nucleotide-binding protein YajQ (163 aa).

The protein belongs to the YajQ family.

Functionally, nucleotide-binding protein. This Shigella dysenteriae serotype 1 (strain Sd197) protein is Nucleotide-binding protein YajQ.